The sequence spans 214 residues: Immunoglobulin lambda-like polypeptide 5 (214 aa).

The N-terminal stretch at 1–35 is a signal peptide; sequence MRPKTGQVGCETPEELGPGPRQRWPLLLLGLAMVA. Residues 98–109 form a j region region; it reads VFGTGTKVTVLG. A c region region spans residues 110–214; sequence QPKANPTVTL…EKTVAPTECS (105 aa). The Ig-like C1-type domain occupies 115 to 209; the sequence is PTVTLFPPSS…EGSTVEKTVA (95 aa). C136 and C195 are joined by a disulfide.

As to expression, contrary to IGLL1, not expressed in pre-B-cells.

It is found in the secreted. The sequence is that of Immunoglobulin lambda-like polypeptide 5 (IGLL5) from Homo sapiens (Human).